A 255-amino-acid polypeptide reads, in one-letter code: Small ribosomal subunit protein eS1A (255 aa).

The span at 1–18 shows a compositional bias: basic residues; the sequence is MAVGKNKRLSKGKKGQKK. Residues 1-20 form a disordered region; the sequence is MAVGKNKRLSKGKKGQKKRV. A2 is modified (N-acetylalanine; partial). T245 bears the Phosphothreonine mark. Residue K248 forms a Glycyl lysine isopeptide (Lys-Gly) (interchain with G-Cter in ubiquitin) linkage. Phosphothreonine is present on T254.

It belongs to the eukaryotic ribosomal protein eS1 family. As to quaternary structure, component of the small ribosomal subunit. Mature ribosomes consist of a small (40S) and a large (60S) subunit. The 40S subunit contains about 33 different proteins and 1 molecule of RNA (18S). The 60S subunit contains about 49 different proteins and 3 molecules of RNA (25S, 5.8S and 5S).

Its subcellular location is the cytoplasm. The chain is Small ribosomal subunit protein eS1A from Saccharomyces cerevisiae (strain RM11-1a) (Baker's yeast).